The chain runs to 332 residues: MNSTLQHGMHTSLHFWNRSTYGQHSNATESLGKGYPDGGCYEQLFVSPEVFVTLGVISLLENILVIVAIAKNKNLHSPMYFFICSLAVADMLVSVSNGSETIVITLLNSTDTDAQSFTVNIDNVIDSVICSSLLASICSLLSIAVDRYFTIFYALQYHNIMTVRRVGIIISCIWAACTVSGILFIIYSDSTAVIICLITMFFTMLALMASLYVHMFLMARLHIKRIAVLPGTGTIRQGANMKGAITLTILIGVFVVCWAPFFLHLIFYISCPQNPYCVCFMSHFNLYLILIMCNSIIDPLIYALRSQELRKTFKEIICCYPLGGLCDLSSRY.

Residues 1–43 (MNSTLQHGMHTSLHFWNRSTYGQHSNATESLGKGYPDGGCYEQ) lie on the Extracellular side of the membrane. N-linked (GlcNAc...) asparagine glycans are attached at residues Asn-2, Asn-17, and Asn-26. Disulfide bonds link Cys-40–Cys-279 and Cys-271–Cys-277. The chain crosses the membrane as a helical span at residues 44–69 (LFVSPEVFVTLGVISLLENILVIVAI). The Cytoplasmic portion of the chain corresponds to 70-81 (AKNKNLHSPMYF). The chain crosses the membrane as a helical span at residues 82–106 (FICSLAVADMLVSVSNGSETIVITL). Ca(2+) contacts are provided by Glu-100, Asp-122, and Asp-126. The Extracellular segment spans residues 107-123 (LNSTDTDAQSFTVNIDN). A helical transmembrane segment spans residues 124–145 (VIDSVICSSLLASICSLLSIAV). Residues 146–165 (DRYFTIFYALQYHNIMTVRR) are Cytoplasmic-facing. Residues 166-186 (VGIIISCIWAACTVSGILFII) form a helical membrane-spanning segment. Over 187-191 (YSDST) the chain is Extracellular. The helical transmembrane segment at 192 to 215 (AVIICLITMFFTMLALMASLYVHM) threads the bilayer. Topologically, residues 216–248 (FLMARLHIKRIAVLPGTGTIRQGANMKGAITLT) are cytoplasmic. Residues 249–271 (ILIGVFVVCWAPFFLHLIFYISC) traverse the membrane as a helical segment. Over 272–280 (PQNPYCVCF) the chain is Extracellular. Residues 281-304 (MSHFNLYLILIMCNSIIDPLIYAL) traverse the membrane as a helical segment. At 305-332 (RSQELRKTFKEIICCYPLGGLCDLSSRY) the chain is on the cytoplasmic side. Cys-318 carries the S-palmitoyl cysteine lipid modification.

This sequence belongs to the G-protein coupled receptor 1 family. In terms of assembly, homodimer; disulfide-linked, also forms higher order oligomers. Interacts with GNAS. Interacts with ATRNL1. Interacts with MGRN1; this interaction competes with GNAS-binding and thus inhibits agonist-induced cAMP production. Interacts with MRAP and MRAP2; these associated factors increase ligand-sensitivity and generation of cAMP.

The protein localises to the cell membrane. In terms of biological role, hormone receptor that acts as a key component of the leptin-melanocortin pathway at the intersection of homeostatic maintenance of energetic state. Plays a role in regulating food intake: activation by a stimulating hormone such as anorexigenic alpha-melanocyte stimulating hormone (alpha-MSH) inhibits appetite, whereas binding to a natural antagonist like Agouti-related protein/AGRP promotes appetite. G-protein-coupled receptor that activates conventional Galphas signaling leading to induction of anorexogenic signaling in the hypothalamus to result in negative energy balance. Regulates the firing activity of neurons from the hypothalamus by alpha-MSH and AGRP independently of Galphas signaling by ligand-induced coupling of closure of inwardly rectifying potassium channel KCNJ13. In intestinal epithelial cells, plays a role in the inhibition of hepatic glucose production via nesfatin-1/NUCB2 leading to increased cyclic adenosine monophosphate (cAMP) levels and glucagon-like peptide 1 (GLP-1) secretion in the intestinal epithelium. This chain is Melanocortin receptor 4 (MC4R), found in Vulpes vulpes (Red fox).